Here is a 447-residue protein sequence, read N- to C-terminus: Tubulin beta chain (447 aa).

8 residues coordinate GTP: Q11, E69, S138, G142, T143, G144, N204, and N226. E69 is a binding site for Mg(2+).

Belongs to the tubulin family. In terms of assembly, dimer of alpha and beta chains. A typical microtubule is a hollow water-filled tube with an outer diameter of 25 nm and an inner diameter of 15 nM. Alpha-beta heterodimers associate head-to-tail to form protofilaments running lengthwise along the microtubule wall with the beta-tubulin subunit facing the microtubule plus end conferring a structural polarity. Microtubules usually have 13 protofilaments but different protofilament numbers can be found in some organisms and specialized cells. Requires Mg(2+) as cofactor.

It is found in the cytoplasm. Its subcellular location is the cytoskeleton. Functionally, tubulin is the major constituent of microtubules, a cylinder consisting of laterally associated linear protofilaments composed of alpha- and beta-tubulin heterodimers. Microtubules grow by the addition of GTP-tubulin dimers to the microtubule end, where a stabilizing cap forms. Below the cap, tubulin dimers are in GDP-bound state, owing to GTPase activity of alpha-tubulin. The sequence is that of Tubulin beta chain (TUB2) from Penicillium digitatum (Green mold).